Reading from the N-terminus, the 271-residue chain is Shikimate dehydrogenase (NADP(+)) (271 aa).

Residues 15–17 and T62 contribute to the shikimate site; that span reads SKS. The Proton acceptor role is filled by K66. An NADP(+)-binding site is contributed by E78. Shikimate is bound by residues N87 and D103. NADP(+) contacts are provided by residues 127–131, 151–156, and M214; these read GAGGA and NRTQAK. Y216 contacts shikimate. G238 contributes to the NADP(+) binding site.

Belongs to the shikimate dehydrogenase family. Homodimer.

The catalysed reaction is shikimate + NADP(+) = 3-dehydroshikimate + NADPH + H(+). The protein operates within metabolic intermediate biosynthesis; chorismate biosynthesis; chorismate from D-erythrose 4-phosphate and phosphoenolpyruvate: step 4/7. Functionally, involved in the biosynthesis of the chorismate, which leads to the biosynthesis of aromatic amino acids. Catalyzes the reversible NADPH linked reduction of 3-dehydroshikimate (DHSA) to yield shikimate (SA). The sequence is that of Shikimate dehydrogenase (NADP(+)) from Shewanella pealeana (strain ATCC 700345 / ANG-SQ1).